Reading from the N-terminus, the 106-residue chain is Immunoglobulin lambda constant 1 (106 aa).

The 95-residue stretch at Pro-7–Ala-101 folds into the Ig-like domain. Residues Cys-28 and Cys-87 are joined by a disulfide bond.

Immunoglobulins are composed of two identical heavy chains and two identical light chains; disulfide-linked.

The protein resides in the secreted. The protein localises to the cell membrane. Functionally, constant region of immunoglobulin light chains. Immunoglobulins, also known as antibodies, are membrane-bound or secreted glycoproteins produced by B lymphocytes. In the recognition phase of humoral immunity, the membrane-bound immunoglobulins serve as receptors which, upon binding of a specific antigen, trigger the clonal expansion and differentiation of B lymphocytes into immunoglobulins-secreting plasma cells. Secreted immunoglobulins mediate the effector phase of humoral immunity, which results in the elimination of bound antigens. The antigen binding site is formed by the variable domain of one heavy chain, together with that of its associated light chain. Thus, each immunoglobulin has two antigen binding sites with remarkable affinity for a particular antigen. The variable domains are assembled by a process called V-(D)-J rearrangement and can then be subjected to somatic hypermutations which, after exposure to antigen and selection, allow affinity maturation for a particular antigen. This Homo sapiens (Human) protein is Immunoglobulin lambda constant 1.